We begin with the raw amino-acid sequence, 195 residues long: 3-isopropylmalate dehydratase small subunit (195 aa).

Belongs to the LeuD family. LeuD type 1 subfamily. Heterodimer of LeuC and LeuD.

The enzyme catalyses (2R,3S)-3-isopropylmalate = (2S)-2-isopropylmalate. Its pathway is amino-acid biosynthesis; L-leucine biosynthesis; L-leucine from 3-methyl-2-oxobutanoate: step 2/4. In terms of biological role, catalyzes the isomerization between 2-isopropylmalate and 3-isopropylmalate, via the formation of 2-isopropylmaleate. The protein is 3-isopropylmalate dehydratase small subunit of Thermobifida fusca (strain YX).